A 28-amino-acid polypeptide reads, in one-letter code: Conotoxin Cl9b (28 aa).

4-hydroxyproline is present on residues P17 and P28.

Contains 3 disulfide bonds. In terms of tissue distribution, expressed by the venom duct.

The protein localises to the secreted. This is Conotoxin Cl9b from Californiconus californicus (California cone).